The primary structure comprises 142 residues: Small ribosomal subunit protein uS12 (142 aa).

Residues Met1 to Gln44 are disordered. Residues Leu11–Leu32 are compositionally biased toward basic and acidic residues.

The protein belongs to the universal ribosomal protein uS12 family. In terms of assembly, part of the 30S ribosomal subunit.

Its function is as follows. With S4 and S5 plays an important role in translational accuracy. Located at the interface of the 30S and 50S subunits. The chain is Small ribosomal subunit protein uS12 from Haloquadratum walsbyi (strain DSM 16790 / HBSQ001).